Reading from the N-terminus, the 260-residue chain is tRNA pseudouridine synthase A (260 aa).

Residue Asp51 is the Nucleophile of the active site. Substrate is bound at residue Tyr109.

Belongs to the tRNA pseudouridine synthase TruA family. Homodimer.

It catalyses the reaction uridine(38/39/40) in tRNA = pseudouridine(38/39/40) in tRNA. In terms of biological role, formation of pseudouridine at positions 38, 39 and 40 in the anticodon stem and loop of transfer RNAs. The polypeptide is tRNA pseudouridine synthase A (Methylibium petroleiphilum (strain ATCC BAA-1232 / LMG 22953 / PM1)).